The chain runs to 525 residues: uncharacterized protein (525 aa).

The next 2 membrane-spanning stretches (helical) occupy residues 36-56 (AVAAVSLTALPIVPLALTLAL) and 61-81 (ALPAGAALWASASLLAAAAAI). The 56-residue stretch at 173-228 (SAVDIRLERTSADGPQFAHIYCEMTPLRDAEGNLLAIVAQSRDVSEEARLQAEAAA) folds into the PAC domain. Residues 246–466 (AVSHELRTPL…VIVVTIPSDA (221 aa)) enclose the Histidine kinase domain. Histidine 249 carries the post-translational modification Phosphohistidine; by autocatalysis. Residues 506–525 (LHTGEIGREGGHGAAQAKTA) form a disordered region.

The protein resides in the cell membrane. The catalysed reaction is ATP + protein L-histidine = ADP + protein N-phospho-L-histidine.. This is an uncharacterized protein from Rhizobium meliloti (strain 1021) (Ensifer meliloti).